Here is a 396-residue protein sequence, read N- to C-terminus: Elongation factor Tu (396 aa).

The region spanning K10 to V206 is the tr-type G domain. A G1 region spans residues G19 to T26. A GTP-binding site is contributed by G19–T26. T26 lines the Mg(2+) pocket. The G2 stretch occupies residues G60–N64. The G3 stretch occupies residues D81–G84. GTP contacts are provided by residues D81–H85 and N136–D139. Positions N136–D139 are G4. The tract at residues S176–L178 is G5.

The protein belongs to the TRAFAC class translation factor GTPase superfamily. Classic translation factor GTPase family. EF-Tu/EF-1A subfamily. Monomer.

The protein localises to the cytoplasm. The enzyme catalyses GTP + H2O = GDP + phosphate + H(+). In terms of biological role, GTP hydrolase that promotes the GTP-dependent binding of aminoacyl-tRNA to the A-site of ribosomes during protein biosynthesis. The chain is Elongation factor Tu from Mycoplasmopsis agalactiae (strain NCTC 10123 / CIP 59.7 / PG2) (Mycoplasma agalactiae).